The primary structure comprises 347 residues: Ribosomal RNA small subunit methyltransferase C (347 aa).

Belongs to the methyltransferase superfamily. RsmC family. In terms of assembly, monomer.

It localises to the cytoplasm. It carries out the reaction guanosine(1207) in 16S rRNA + S-adenosyl-L-methionine = N(2)-methylguanosine(1207) in 16S rRNA + S-adenosyl-L-homocysteine + H(+). Specifically methylates the guanine in position 1207 of 16S rRNA in the 30S particle. The sequence is that of Ribosomal RNA small subunit methyltransferase C from Shewanella baltica (strain OS185).